The chain runs to 308 residues: Protein translocase subunit SecF (308 aa).

Helical transmembrane passes span 10-30, 129-149, 160-180, 181-201, 241-261, and 264-284; these read LFFA…AIFG, LAVS…FRGV, IIAM…GGVL, FGWQ…GFSV, TQLM…GITL, and FAII…FIAA.

It belongs to the SecD/SecF family. SecF subfamily. As to quaternary structure, forms a complex with SecD. Part of the essential Sec protein translocation apparatus which comprises SecA, SecYEG and auxiliary proteins SecDF. Other proteins may also be involved.

The protein localises to the cell membrane. Part of the Sec protein translocase complex. Interacts with the SecYEG preprotein conducting channel. SecDF uses the proton motive force (PMF) to complete protein translocation after the ATP-dependent function of SecA. The sequence is that of Protein translocase subunit SecF from Anaerolinea thermophila (strain DSM 14523 / JCM 11388 / NBRC 100420 / UNI-1).